Consider the following 488-residue polypeptide: Monothiol glutaredoxin-S17 (488 aa).

Residues 2–107 (SGTVKDIVSK…LANKVGKVAG (106 aa)) enclose the Thioredoxin domain. Glutaredoxin domains follow at residues 154–256 (KSRL…GITT), 284–386 (RARL…GITG), and 391–488 (EDRL…TLSE). Lys-408 is a glutathione binding site. Cys-416 is a [2Fe-2S] cluster binding site. Residues Arg-445, Phe-457, and 470–471 (CD) each bind glutathione.

Belongs to the glutaredoxin family. CGFS subfamily. In terms of assembly, [2Fe-2S]-bridged holo-homodimer. Interacts in vitro with SUFE1, BOLA1, BOLA2 and BOLA4. Interacts in vivo only with BOLA2. Interacts with RGLG3 and RGLG4. In terms of processing, ubiquitinated at Lys-154. Polyubiquitinated by RGLG3 and RGLG4. Polyubiquitination of GRXS17 leads to its degradation by the proteasome.

The protein localises to the cytoplasm. May only reduce GSH-thiol disulfides, but not protein disulfides. Participates probably to the maturation of iron-sulfur proteins and to the regulation of the redox state of the BOLA proteins. The GRXS17-BOLA2 heterodimer binds a labile, oxygen sensitive iron-sulfur cluster. This chain is Monothiol glutaredoxin-S17, found in Arabidopsis thaliana (Mouse-ear cress).